A 164-amino-acid polypeptide reads, in one-letter code: MTCQTYNLFVLSVIMIYYGHTASSLNLVQLQDDIDKLKADFNSSHSDVADGGPIIVEKLKNWTERNEKRIILSQIVSMYLEMLENTDKSKPHIKHISEELYTLKNNLPDGVKKVKDIMDLAKLPMNDLRIQRKAANELFSILQKLVDPPSFKRKRSQSQRRCNC.

Residues 1–19 (MTCQTYNLFVLSVIMIYYG) form the signal peptide. N-linked (GlcNAc...) asparagine glycosylation is found at asparagine 42 and asparagine 61.

This sequence belongs to the type II (or gamma) interferon family. In terms of assembly, homodimer.

It is found in the secreted. Functionally, produced by lymphocytes activated by specific antigens or mitogens. IFN-gamma, in addition to having antiviral activity, has important immunoregulatory functions. It is a potent activator of macrophages, it has antiproliferative effects on transformed cells and it can potentiate the antiviral and antitumor effects of the type I interferons. This chain is Interferon gamma (IFNG), found in Gallus gallus (Chicken).